Consider the following 309-residue polypeptide: Vomeronasal type-1 receptor 46 (309 aa).

Residues 1–20 lie on the Extracellular side of the membrane; it reads MNKANIFCTDTNMKVILFSE. A helical membrane pass occupies residues 21 to 41; it reads VSVGISANSILFISHLCMFLG. Residues 42–50 are Cytoplasmic-facing; sequence ESRPKPIDL. A helical membrane pass occupies residues 51–71; it reads YIAFFSLTHLMLLVTMGLIAV. Over 72 to 85 the chain is Extracellular; the sequence is DMFMPGGRWDSTTC. Cysteine 85 and cysteine 171 are disulfide-bonded. A helical membrane pass occupies residues 86 to 106; that stretch reads TFLMYLHIVLRGPTLCATCLL. The Cytoplasmic portion of the chain corresponds to 107–134; it reads NVLWTITLSPRNSCLTKFKHKSPHHISG. Residues 135 to 155 form a helical membrane-spanning segment; the sequence is AFLFLCVLYMSLSSELLSITA. The Extracellular segment spans residues 156–192; that stretch reads SLNLTSENFLYVSQSCSILPMSYSIKSMFSTKMAIRE. Asparagine 158 is a glycosylation site (N-linked (GlcNAc...) asparagine). A helical membrane pass occupies residues 193-213; the sequence is AFLIGLMVLSSGYMVALLWSH. Residues 214 to 237 lie on the Cytoplasmic side of the membrane; it reads KKQAQHLHSNSLSLKASPEQRATR. Residues 238-258 traverse the membrane as a helical segment; the sequence is TIMLLMSFFVVFYILDSVIFY. Over 259-267 the chain is Extracellular; the sequence is SRMKFKDDS. A helical transmembrane segment spans residues 268 to 288; sequence IFVCVQIIVSHSYVTVSPFVF. Topologically, residues 289–309 are cytoplasmic; it reads ICTEKHIIKFFWSLCGRIVNI.

This sequence belongs to the G-protein coupled receptor 1 family.

It is found in the cell membrane. Putative pheromone receptor implicated in the regulation of social and reproductive behavior. The chain is Vomeronasal type-1 receptor 46 (Vmn1r46) from Mus musculus (Mouse).